The following is a 52-amino-acid chain: DNA-directed RNA polymerase subunit Rpo12 (52 aa).

Positions 13, 30, and 33 each coordinate Zn(2+).

Belongs to the archaeal Rpo12/eukaryotic RPC10 RNA polymerase subunit family. As to quaternary structure, part of the RNA polymerase complex. The cofactor is Zn(2+).

It is found in the cytoplasm. The catalysed reaction is RNA(n) + a ribonucleoside 5'-triphosphate = RNA(n+1) + diphosphate. Its function is as follows. DNA-dependent RNA polymerase (RNAP) catalyzes the transcription of DNA into RNA using the four ribonucleoside triphosphates as substrates. This is DNA-directed RNA polymerase subunit Rpo12 from Pyrobaculum arsenaticum (strain DSM 13514 / JCM 11321 / PZ6).